Consider the following 71-residue polypeptide: Small ribosomal subunit protein bS21 (71 aa).

This sequence belongs to the bacterial ribosomal protein bS21 family.

This is Small ribosomal subunit protein bS21 from Blochmanniella floridana.